Consider the following 412-residue polypeptide: GTPase Obg (412 aa).

Positions 1–159 (MKFLDQAKIF…RWIWLRLKMI (159 aa)) constitute an Obg domain. The 168-residue stretch at 160–327 (ADAGLVGLPN…ILARLFTHIR (168 aa)) folds into the OBG-type G domain. Residues 166–173 (GLPNAGKS), 191–195 (FTTLH), 212–215 (DIPG), 279–282 (NKCD), and 308–310 (SGV) each bind GTP. The Mg(2+) site is built by S173 and T193. The tract at residues 335–412 (AVPAASPIFG…ADDEEDDAEE (78 aa)) is disordered. The span at 385 to 412 (NDGDEVDEDYDDEDLEEVADDEEDDAEE) shows a compositional bias: acidic residues.

This sequence belongs to the TRAFAC class OBG-HflX-like GTPase superfamily. OBG GTPase family. In terms of assembly, monomer. It depends on Mg(2+) as a cofactor.

It is found in the cytoplasm. An essential GTPase which binds GTP, GDP and possibly (p)ppGpp with moderate affinity, with high nucleotide exchange rates and a fairly low GTP hydrolysis rate. Plays a role in control of the cell cycle, stress response, ribosome biogenesis and in those bacteria that undergo differentiation, in morphogenesis control. In Paramagnetospirillum magneticum (strain ATCC 700264 / AMB-1) (Magnetospirillum magneticum), this protein is GTPase Obg.